We begin with the raw amino-acid sequence, 158 residues long: NADH-quinone oxidoreductase subunit B (158 aa).

The [4Fe-4S] cluster site is built by C37, C38, C102, and C132.

It belongs to the complex I 20 kDa subunit family. In terms of assembly, NDH-1 is composed of 14 different subunits. Subunits NuoB, C, D, E, F, and G constitute the peripheral sector of the complex. It depends on [4Fe-4S] cluster as a cofactor.

It localises to the cell inner membrane. It carries out the reaction a quinone + NADH + 5 H(+)(in) = a quinol + NAD(+) + 4 H(+)(out). Functionally, NDH-1 shuttles electrons from NADH, via FMN and iron-sulfur (Fe-S) centers, to quinones in the respiratory chain. Couples the redox reaction to proton translocation (for every two electrons transferred, four hydrogen ions are translocated across the cytoplasmic membrane), and thus conserves the redox energy in a proton gradient. This chain is NADH-quinone oxidoreductase subunit B, found in Legionella pneumophila (strain Corby).